Reading from the N-terminus, the 179-residue chain is Large ribosomal subunit protein uL5 (179 aa).

This sequence belongs to the universal ribosomal protein uL5 family. As to quaternary structure, part of the 50S ribosomal subunit; part of the 5S rRNA/L5/L18/L25 subcomplex. Contacts the 5S rRNA and the P site tRNA. Forms a bridge to the 30S subunit in the 70S ribosome.

Functionally, this is one of the proteins that bind and probably mediate the attachment of the 5S RNA into the large ribosomal subunit, where it forms part of the central protuberance. In the 70S ribosome it contacts protein S13 of the 30S subunit (bridge B1b), connecting the 2 subunits; this bridge is implicated in subunit movement. Contacts the P site tRNA; the 5S rRNA and some of its associated proteins might help stabilize positioning of ribosome-bound tRNAs. This is Large ribosomal subunit protein uL5 from Azotobacter vinelandii (strain DJ / ATCC BAA-1303).